The sequence spans 241 residues: 2-C-methyl-D-erythritol 4-phosphate cytidylyltransferase (241 aa).

This sequence belongs to the IspD/TarI cytidylyltransferase family. IspD subfamily.

The catalysed reaction is 2-C-methyl-D-erythritol 4-phosphate + CTP + H(+) = 4-CDP-2-C-methyl-D-erythritol + diphosphate. The protein operates within isoprenoid biosynthesis; isopentenyl diphosphate biosynthesis via DXP pathway; isopentenyl diphosphate from 1-deoxy-D-xylulose 5-phosphate: step 2/6. Functionally, catalyzes the formation of 4-diphosphocytidyl-2-C-methyl-D-erythritol from CTP and 2-C-methyl-D-erythritol 4-phosphate (MEP). The sequence is that of 2-C-methyl-D-erythritol 4-phosphate cytidylyltransferase from Mycobacterium leprae (strain Br4923).